The primary structure comprises 190 residues: Shikimate kinase (190 aa).

13–18 lines the ATP pocket; that stretch reads GSGKTT. A Mg(2+)-binding site is contributed by threonine 17. 3 residues coordinate substrate: aspartate 35, arginine 59, and glycine 81. Arginine 119 contributes to the ATP binding site. Arginine 138 contributes to the substrate binding site. Glutamine 155 is an ATP binding site.

Belongs to the shikimate kinase family. As to quaternary structure, monomer. Mg(2+) serves as cofactor.

Its subcellular location is the cytoplasm. The enzyme catalyses shikimate + ATP = 3-phosphoshikimate + ADP + H(+). It functions in the pathway metabolic intermediate biosynthesis; chorismate biosynthesis; chorismate from D-erythrose 4-phosphate and phosphoenolpyruvate: step 5/7. Catalyzes the specific phosphorylation of the 3-hydroxyl group of shikimic acid using ATP as a cosubstrate. This is Shikimate kinase from Nitrosococcus oceani (strain ATCC 19707 / BCRC 17464 / JCM 30415 / NCIMB 11848 / C-107).